Consider the following 410-residue polypeptide: UDP-N-acetylglucosamine--N-acetylmuramyl-(pentapeptide) pyrophosphoryl-undecaprenol N-acetylglucosamine transferase (410 aa).

The segment at 1–35 (MKDTVSQPAGGRGATAPRPADAASPSCGSSPSADS) is disordered. The segment covering 14-35 (ATAPRPADAASPSCGSSPSADS) has biased composition (low complexity). UDP-N-acetyl-alpha-D-glucosamine-binding positions include 45-47 (TAG), Asn-167, Arg-204, Ser-238, and Gln-334.

It belongs to the glycosyltransferase 28 family. MurG subfamily.

It localises to the cell membrane. The enzyme catalyses di-trans,octa-cis-undecaprenyl diphospho-N-acetyl-alpha-D-muramoyl-L-alanyl-D-glutamyl-meso-2,6-diaminopimeloyl-D-alanyl-D-alanine + UDP-N-acetyl-alpha-D-glucosamine = di-trans,octa-cis-undecaprenyl diphospho-[N-acetyl-alpha-D-glucosaminyl-(1-&gt;4)]-N-acetyl-alpha-D-muramoyl-L-alanyl-D-glutamyl-meso-2,6-diaminopimeloyl-D-alanyl-D-alanine + UDP + H(+). Its pathway is cell wall biogenesis; peptidoglycan biosynthesis. Functionally, cell wall formation. Catalyzes the transfer of a GlcNAc subunit on undecaprenyl-pyrophosphoryl-MurNAc-pentapeptide (lipid intermediate I) to form undecaprenyl-pyrophosphoryl-MurNAc-(pentapeptide)GlcNAc (lipid intermediate II). The sequence is that of UDP-N-acetylglucosamine--N-acetylmuramyl-(pentapeptide) pyrophosphoryl-undecaprenol N-acetylglucosamine transferase from Mycobacterium tuberculosis (strain ATCC 25177 / H37Ra).